The primary structure comprises 166 residues: Large ribosomal subunit protein uL10 (166 aa).

The protein belongs to the universal ribosomal protein uL10 family. Part of the ribosomal stalk of the 50S ribosomal subunit. The N-terminus interacts with L11 and the large rRNA to form the base of the stalk. The C-terminus forms an elongated spine to which L12 dimers bind in a sequential fashion forming a multimeric L10(L12)X complex.

In terms of biological role, forms part of the ribosomal stalk, playing a central role in the interaction of the ribosome with GTP-bound translation factors. The polypeptide is Large ribosomal subunit protein uL10 (Streptococcus equi subsp. zooepidemicus (strain MGCS10565)).